The following is a 1013-amino-acid chain: MPRSSATARKSHSNRHDNGVVGSGKKVSKQKSNGHLNGNHANSSTPTSGPSSQVDWPSSRSNSDTAIPTTAAAAARLNGATENSKDIRGHLNGYAKGTSDMSYGQANGAVPQNGCLPGDAARRTEKPATASKRSGSSASVNPLHLASTILKSCPMYDTIAILIFLLQLPPMVLTLVQFLFASLTFMPPSGASAGSLTSNFDIFQGPAGTPSLGTMIAMDGFCLLFWGLFMWTWAQNFALDLAHVQVAITLGGGGSGKNGGVNALCVGIVLVLHLIRSKGIQDFVMGHLLSAKIISPDLLSQYSHLIPAEFRRTEPQSSPSWIRSLLAVHILAQAGTAMARRSMAKNRAPAPPRTGKRIDTEASAGSQTQFDSAFESGASMSSYIGPDGQFITPATHKDGRDRLISAKKRRRQANQVRSRQPFWAALASTKVTVMREYEHSRALSKTARGLTMTEDDLQGVSLDDGLVWITDVDSSTIRFAAGDFSSPDDASGSGVCETGRLSDDMEPFYVCVNGAQWATATISKVPDARKGTSAVHWRGEISGLAPNCAYTCSFMRSDTDEEICAMSVKTPATSDAEQVSSISAPPQPTYRPSSPTTTLKNSIINAEAKLNEKRSRMKKAKNDHKLVVSKIRKELENYNHRLHSGTDENRQKQRSLQLERNIKQTEEATAALGEQLDNLENIPEEELEEWTMQKAKYERELELLNSVKEELIAARSAVAREVSSLESELNSTVQRRERLQGRRTRVNEQYERIISANAQGLNERERRAAEQFAREQDQAKLEANFNEQLASITQSIQEYQLRTNQLWQQSAAIEQAIQQQQQQMLMDSAPLTPEGNLPGTNPLGDTPSLALAGLTTSAPSSRSLLGLNFPPLKSSPLQHASSLVGATSSHPASPTQTPSYLQHFPTSPLANASSPFDPDFVYRDRSFSNRSGRSSLYGFDLIDSSRRAPFQFDLSEAASEKRRSSGSESNGPNLGLRPISSPFPRAGSRASGSGSGGSGSGSGSPSSAAGKGI.

Disordered regions lie at residues 1–65 (MPRS…NSDT) and 104–139 (GQAN…SSAS). Positions 33–64 (NGHLNGNHANSSTPTSGPSSQVDWPSSRSNSD) are enriched in polar residues. A run of 3 helical transmembrane segments spans residues 159 to 179 (IAIL…VQFL), 212 to 232 (LGTM…FMWT), and 255 to 275 (SGKN…LHLI). Disordered regions lie at residues 342-367 (SMAK…AGSQ), 574-599 (SDAE…TTTL), 878-906 (QHAS…HFPT), and 954-1013 (LSEA…GKGI). A coiled-coil region spans residues 597-806 (TTLKNSIINA…QEYQLRTNQL (210 aa)). Gly residues predominate over residues 993–1002 (SGSGGSGSGS). Low complexity predominate over residues 1003-1013 (GSPSSAAGKGI).

Belongs to the acrB family.

It is found in the membrane. In terms of biological role, component of the regulatory network controlling carbon source utilization through ubiquitination and deubiquitination involving creA, creB, creC, creD and acrB. Involved in resistance to acriflavine, and required for normal growth on a range of sole carbon sources, including fructose, cellobiose, raffinose, and starch, and reduced utilization of amino acids, including GABA and beta-alanine, as sole carbon and nitrogen sources. This chain is Probable ubiquitination network signaling protein acrB (acrB), found in Aspergillus terreus (strain NIH 2624 / FGSC A1156).